Here is a 178-residue protein sequence, read N- to C-terminus: Conodipine-P2 (178 aa).

A signal peptide spans 1–24 (MKLLAPVLWAMAALGVTWLVAVDS). Residues Pro-38, Pro-42, and Pro-49 each carry the 4-hydroxyproline modification. His-54 is an active-site residue. The propeptide at 98–130 (KREVTSHRATSIAHSRLWKTALDQKSFLNRKAR) is interchain peptide. A Pyrrolidone carboxylic acid modification is found at Gln-131. Position 137 is a 4-hydroxyproline (Pro-137).

Belongs to the phospholipase A2 family. Group IX subfamily. In terms of assembly, heterodimer of an alpha and a beta chain; probably disulfide-linked. Ca(2+) serves as cofactor. Expressed by the venom duct.

Its subcellular location is the secreted. The catalysed reaction is a 1,2-diacyl-sn-glycero-3-phosphocholine + H2O = a 1-acyl-sn-glycero-3-phosphocholine + a fatty acid + H(+). Its function is as follows. Catalyzes the calcium-dependent hydrolysis of the 2-acyl groups in 3-sn-phosphoglycerides. In Conus purpurascens (Purple cone), this protein is Conodipine-P2.